The chain runs to 362 residues: Outer membrane porin F (362 aa).

Positions 1 to 22 (MMKRNILAVIVPALLVAGTANA) are cleaved as a signal peptide.

Belongs to the Gram-negative porin family. As to quaternary structure, homotrimer. Forms mixed heterotrimers with OmpC; other mixed heterotrimers are also probable.

The protein resides in the cell outer membrane. Its function is as follows. Forms pores that allow passive diffusion of small molecules across the outer membrane. Functionally, (Microbial infection) Is the major receptor for colicin E5. In terms of biological role, (Microbial infection) A mixed OmpC-OmpF heterotrimer is the outer membrane receptor for toxin CdiA-EC536. The polypeptide is Outer membrane porin F (ompF) (Escherichia coli O6:K15:H31 (strain 536 / UPEC)).